Here is a 787-residue protein sequence, read N- to C-terminus: ATP-dependent RNA helicase dbp4 (787 aa).

Residues 1–28 (MAPAAGPRTGKHAKPQRSKTLKRKRGQE) are disordered. Residues 9-25 (TGKHAKPQRSKTLKRKR) are compositionally biased toward basic residues. Positions 47–75 (KSFSDLPLSEPTASGLASSHYKTLTDIQS) match the Q motif motif. Residues 78-252 (ISHALKGRDI…RLSLQDPEYV (175 aa)) form the Helicase ATP-binding domain. Residue 91 to 98 (AKTGSGKT) participates in ATP binding. A DEAD box motif is present at residues 200-203 (DEAD). Positions 278 to 437 (KLDILWSFIR…SIKDQLQNMC (160 aa)) constitute a Helicase C-terminal domain. 4 disordered regions span residues 494–542 (GDDT…DRMF), 560–579 (DDGT…DEDD), 586–618 (RRFD…VRRE), and 653–776 (DEEQ…QTLE). The span at 522–542 (GEKKSKKKEEPQVRTKYDRMF) shows a compositional bias: basic and acidic residues. Composition is skewed to basic and acidic residues over residues 586 to 595 (RRFDAGDKDL) and 656 to 690 (QFKA…EIAK). Positions 691–700 (QKRREKKEKR) are enriched in basic residues. Residues 741 to 755 (KFTEANDREEAEPWY) are compositionally biased toward basic and acidic residues.

The protein belongs to the DEAD box helicase family. DDX10/DBP4 subfamily. As to quaternary structure, interacts with the U3 and U14 snoRNAs. Associates with pre-ribosomal complexes.

Its subcellular location is the nucleus. The protein resides in the nucleolus. The catalysed reaction is ATP + H2O = ADP + phosphate + H(+). In terms of biological role, ATP-dependent RNA helicase required for ribosome biogenesis. Involved in the release of U14 snoRNA in pre-ribosomal complexes. Required for pre-rRNA cleavage at site A2. This Aspergillus fumigatus (strain ATCC MYA-4609 / CBS 101355 / FGSC A1100 / Af293) (Neosartorya fumigata) protein is ATP-dependent RNA helicase dbp4 (dbp4).